We begin with the raw amino-acid sequence, 453 residues long: Protein FAM222A (453 aa).

It belongs to the FAM222 family.

The protein is Protein FAM222A (Fam222a) of Mus musculus (Mouse).